Reading from the N-terminus, the 323-residue chain is AA9 family lytic polysaccharide monooxygenase B (323 aa).

Residues 1–18 (MKSFTLTTLAALAGNAAA) form the signal peptide. Cu(2+) is bound by residues histidine 19 and histidine 97. A disulfide bond links cysteine 56 and cysteine 191. O2 is bound by residues histidine 177 and glutamine 186. Tyrosine 188 serves as a coordination point for Cu(2+). The region spanning 286–323 (CTVQKYQQCGGQGYTGCTNCASGSTCSAVSPPYYSQCV) is the CBM1 domain.

It belongs to the polysaccharide monooxygenase AA9 family. Requires Cu(2+) as cofactor.

It localises to the secreted. The enzyme catalyses [(1-&gt;4)-beta-D-glucosyl]n+m + reduced acceptor + O2 = 4-dehydro-beta-D-glucosyl-[(1-&gt;4)-beta-D-glucosyl]n-1 + [(1-&gt;4)-beta-D-glucosyl]m + acceptor + H2O.. With respect to regulation, is able to utilize various natural phenolic compounds as reducing agents. Most of these reducing agents are present in plants, either free or as lignin building blocks, such as sinapic acid, or as flavonoids such as catechin and dopamine. Phenolic compounds with 1,2-benzenediol and 1,2,3-benzenetriol moieties yield the highest release of oxidized and non-oxidized glucooligosaccharides from cellulose compared to monophenols or sulfur-containing compounds. Functionally, lytic polysaccharide monooxygenase (LPMO) that depolymerizes crystalline and amorphous polysaccharides via the oxidation of scissile alpha- or beta-(1-4)-glycosidic bonds, yielding C1 oxidation products. Catalysis by LPMOs requires the reduction of the active-site copper from Cu(II) to Cu(I) by a reducing agent and H(2)O(2) or O(2) as a cosubstrate. Is active on regenerated amorphous cellulose (RAC). The sequence is that of AA9 family lytic polysaccharide monooxygenase B from Thermothelomyces thermophilus (strain ATCC 42464 / BCRC 31852 / DSM 1799) (Sporotrichum thermophile).